A 200-amino-acid chain; its full sequence is Phospholipase A2 inhibitor CgMIP-I (200 aa).

Positions 1–19 (MKYLHTICLLFIFVARGNS) are cleaved as a signal peptide. 7 disulfides stabilise this stretch: C22-C46, C25-C32, C39-C67, C73-C94, C95-C100, C118-C143, and C136-C165. N176 carries an N-linked (GlcNAc...) asparagine glycan.

The protein belongs to the CNF-like-inhibitor family. In terms of assembly, homomer of 110 kDa composed of 20-25-kDa subunits. In terms of processing, N-glycosylated. The glycosidic chain may contain superficial sialic acid residues. In terms of tissue distribution, expressed by the liver.

Its subcellular location is the secreted. Inhibits the enzymatic activity of basic phospholipase A2. Specifically neutralizes PLA2, myotoxic, edema-forming, cytolytic, and anti-coagulant activities, as well as intracerebral lethal effect of the basic myotoxin I from the same venom (AC P0DQP6), crotoxin heterodimer and crotoxin subunit B alone. Does not block the enzymatic activity of crude acidic PLA2 fractions from the same venom. The sequence is that of Phospholipase A2 inhibitor CgMIP-I from Cerrophidion godmani (Porthidium godmani).